Consider the following 204-residue polypeptide: Inositol diphosphatase DSP2 (204 aa).

The disordered stretch occupies residues M1–E27. A compositionally biased stretch (basic and acidic residues) spans Q13–E27. One can recognise a Tyrosine-protein phosphatase domain in the interval N51–Q203. The segment at F107–I119 is WPD loop important for active site topology. The 1D-myo-inositol hexakisphosphate site is built by N118, I119, and K123. The Phosphocysteine intermediate role is filled by C143.

Belongs to the protein-tyrosine phosphatase family. Atypical dual-specificity phosphatase Siw14-like subfamily. As to expression, expressed in roots and young panicles.

Its subcellular location is the cytoplasm. It localises to the nucleus. The catalysed reaction is 5-diphospho-1D-myo-inositol 1,2,3,4,6-pentakisphosphate + H2O = 1D-myo-inositol hexakisphosphate + phosphate + H(+). The enzyme catalyses 1,5-bis(diphospho)-1D-myo-inositol 2,3,4,6-tetrakisphosphate + H2O = 1-diphospho-1D-myo-inositol 2,3,4,5,6-pentakisphosphate + phosphate + 2 H(+). It catalyses the reaction 3,5-bis(diphospho)-1D-myo-inositol 1,2,4,6-tetrakisphosphate + H2O = 3-diphospho-1D-myo-inositol 1,2,4,5,6-pentakisphosphate + phosphate + 2 H(+). It carries out the reaction 6-diphospho-1D-myo-inositol pentakisphosphate + H2O = 1D-myo-inositol hexakisphosphate + phosphate + H(+). Its function is as follows. Cleaves the beta-phosphate at the 5-position of soluble inositol pyrophosphates. Has highest activity on 5-diphosphoinositol 1,2,3,4,6-pentakisphosphate (5-InsP(7)). Acts as a negative regulator of defense responses against the fungal pathogen Magnaporthe oryzae. The chain is Inositol diphosphatase DSP2 from Oryza sativa subsp. japonica (Rice).